Consider the following 384-residue polypeptide: D-alanine--D-alanine ligase (384 aa).

The 208-residue stretch at 167–374 (KKLFAAEGLP…YPTLLATMVD (208 aa)) folds into the ATP-grasp domain. 195 to 250 (CERLSLPVFVKPARGGSSIGISRVSSWGQLPSAIAYARRHDPKVIVEAAVNGRELE) contacts ATP. Residues Asp-329, Glu-341, and Asn-343 each contribute to the Mg(2+) site.

This sequence belongs to the D-alanine--D-alanine ligase family. Requires Mg(2+) as cofactor. Mn(2+) is required as a cofactor.

The protein localises to the cytoplasm. It catalyses the reaction 2 D-alanine + ATP = D-alanyl-D-alanine + ADP + phosphate + H(+). It participates in cell wall biogenesis; peptidoglycan biosynthesis. Its function is as follows. Cell wall formation. The polypeptide is D-alanine--D-alanine ligase (Mycobacterium leprae (strain TN)).